Consider the following 138-residue polypeptide: Small ribosomal subunit protein uS12 (138 aa).

Residues 33-55 are disordered; it reads KEHTNVSSPQKRGVCTRVGTMTP. A 3-methylthioaspartic acid modification is found at aspartate 102.

Belongs to the universal ribosomal protein uS12 family. In terms of assembly, part of the 30S ribosomal subunit. Contacts proteins S8 and S17. May interact with IF1 in the 30S initiation complex.

With S4 and S5 plays an important role in translational accuracy. Its function is as follows. Interacts with and stabilizes bases of the 16S rRNA that are involved in tRNA selection in the A site and with the mRNA backbone. Located at the interface of the 30S and 50S subunits, it traverses the body of the 30S subunit contacting proteins on the other side and probably holding the rRNA structure together. The combined cluster of proteins S8, S12 and S17 appears to hold together the shoulder and platform of the 30S subunit. The polypeptide is Small ribosomal subunit protein uS12 (Bacillus licheniformis (strain ATCC 14580 / DSM 13 / JCM 2505 / CCUG 7422 / NBRC 12200 / NCIMB 9375 / NCTC 10341 / NRRL NRS-1264 / Gibson 46)).